Consider the following 749-residue polypeptide: Patatin-like phospholipase domain-containing protein AN0408 (749 aa).

Residues 1 to 11 show a composition bias toward basic and acidic residues; sequence MEKSAAGDNID. The disordered stretch occupies residues 1 to 21; the sequence is MEKSAAGDNIDKYSPSSIPDY. Residues 92 to 112 traverse the membrane as a helical segment; sequence WPFLLFVLGWITFLSVGYALT. Positions 280–471 constitute a PNPLA domain; that stretch reads LCLSGGATFA…RTDIPIKALN (192 aa). Residues 311–315 carry the GXSXG motif; the sequence is GTSGG. Ser313 acts as the Nucleophile in catalysis. Catalysis depends on Asp458, which acts as the Proton acceptor. Positions 630 to 659 are disordered; the sequence is SIQPFPFDNGAAGADQKSNDPREERLNRNF. Residues 646-659 show a composition bias toward basic and acidic residues; sequence KSNDPREERLNRNF.

Belongs to the PLPL family.

Its subcellular location is the membrane. Its function is as follows. Probable lipid hydrolase. This chain is Patatin-like phospholipase domain-containing protein AN0408, found in Emericella nidulans (strain FGSC A4 / ATCC 38163 / CBS 112.46 / NRRL 194 / M139) (Aspergillus nidulans).